Reading from the N-terminus, the 323-residue chain is NADH-ubiquinone oxidoreductase chain 1 (323 aa).

The next 8 helical transmembrane spans lie at 8 to 28 (LINP…LTLI), 75 to 95 (MFLI…APLP), 105 to 125 (LGIL…LGSG), 151 to 171 (LGLI…TTLM), 177 to 197 (MWLI…TLAE), 234 to 254 (ANIL…SSFM), 258 to 278 (ELTT…FLWV), and 298 to 318 (FLPI…SMLG).

The protein belongs to the complex I subunit 1 family. In terms of assembly, core subunit of respiratory chain NADH dehydrogenase (Complex I) which is composed of 45 different subunits.

The protein resides in the mitochondrion inner membrane. It carries out the reaction a ubiquinone + NADH + 5 H(+)(in) = a ubiquinol + NAD(+) + 4 H(+)(out). Core subunit of the mitochondrial membrane respiratory chain NADH dehydrogenase (Complex I) which catalyzes electron transfer from NADH through the respiratory chain, using ubiquinone as an electron acceptor. Essential for the catalytic activity and assembly of complex I. This is NADH-ubiquinone oxidoreductase chain 1 (mt-nd1) from Xenopus laevis (African clawed frog).